The following is a 462-amino-acid chain: Serine--tRNA ligase, cytoplasmic (462 aa).

Residue Lys-241 forms a Glycyl lysine isopeptide (Lys-Gly) (interchain with G-Cter in URM1) linkage. 246 to 248 (TSE) serves as a coordination point for L-serine. ATP is bound by residues 279-281 (RRE) and Val-295. Residue Glu-302 participates in L-serine binding. Glycyl lysine isopeptide (Lys-Gly) (interchain with G-Cter in URM1) cross-links involve residues Lys-350 and Lys-351. 366-369 (ELVS) contributes to the ATP binding site. Cys-373 and Cys-400 each carry cysteine persulfide. An L-serine-binding site is contributed by Thr-404.

Belongs to the class-II aminoacyl-tRNA synthetase family. Type-1 seryl-tRNA synthetase subfamily. As to quaternary structure, homodimer; the tRNA molecule probably binds across the dimer. Interacts with ABP140; interaction is required for the tRNA N(3)-methylcytidine methyltransferase activity of ABP140. Post-translationally, conjugated to URM1, a ubiquitin-like protein, in response to oxidative stresses. The attachment of URM1 to lysine residues exclusively depends on the presence of a peroxidatic cysteine in the target protein, with low specificity for the particular residue, motif, or structural context at which urmylation can occur. The URM1-conjugation reaction is mechanistically and directly coupled to the process of cysteine persulfidation, transfering the sulfur atom of the URM1 thiocarboxyl group to redox-active cysteine residues in the target protein if it is exposed to oxidative conditions. Persulfidated on specific redox-active cysteine residues. Persulfidation (also called protein S-sulfhydration) may provide a molecular mechanism that enables cells to protect vulnerable cysteine residues from reactive oxygen species (ROS) under stress conditions.

It localises to the cytoplasm. The protein localises to the cytosol. The catalysed reaction is tRNA(Ser) + L-serine + ATP = L-seryl-tRNA(Ser) + AMP + diphosphate + H(+). Its function is as follows. Catalyzes the attachment of serine to tRNA(Ser) in a two-step reaction: serine is first activated by ATP to form Ser-AMP and then transferred to the acceptor end of tRNA(Ser). The sequence is that of Serine--tRNA ligase, cytoplasmic (SES1) from Saccharomyces cerevisiae (strain ATCC 204508 / S288c) (Baker's yeast).